The following is a 227-amino-acid chain: Ion-translocating oxidoreductase complex subunit E (227 aa).

Transmembrane regions (helical) follow at residues 34-56 (AINAIGLGMTTTLVLTITNTIIS), 68-88 (IPIYMMIISSVVTSIEMLLHA), 91-111 (FNLYQSLGIFIPLIVTNCIIV), 127-147 (FFDGIFIGLGSMFAMFAVGSI), and 181-201 (TIILAVFPPGGFLILGFLIAI).

This sequence belongs to the NqrDE/RnfAE family. The complex is composed of six subunits: RnfA, RnfB, RnfC, RnfD, RnfE and RnfG.

Its subcellular location is the cell inner membrane. In terms of biological role, part of a membrane-bound complex that couples electron transfer with translocation of ions across the membrane. In Buchnera aphidicola subsp. Acyrthosiphon pisum (strain 5A), this protein is Ion-translocating oxidoreductase complex subunit E.